The primary structure comprises 407 residues: Carbamoyl phosphate synthase small chain (407 aa).

Residues 1–205 (MTETTPKTAP…LQDGYGEQDA (205 aa)) form a CPSase region. 3 residues coordinate L-glutamine: Ser-60, Gly-257, and Gly-259. Residues 209 to 397 (HVVALDFGVK…INLIRERKGQ (189 aa)) enclose the Glutamine amidotransferase type-1 domain. The Nucleophile role is filled by Cys-286. Residues Leu-287, Gln-290, Asn-328, Gly-330, and Phe-331 each contribute to the L-glutamine site. Active-site residues include His-370 and Glu-372.

Belongs to the CarA family. Composed of two chains; the small (or glutamine) chain promotes the hydrolysis of glutamine to ammonia, which is used by the large (or ammonia) chain to synthesize carbamoyl phosphate. Tetramer of heterodimers (alpha,beta)4.

It carries out the reaction hydrogencarbonate + L-glutamine + 2 ATP + H2O = carbamoyl phosphate + L-glutamate + 2 ADP + phosphate + 2 H(+). The enzyme catalyses L-glutamine + H2O = L-glutamate + NH4(+). Its pathway is amino-acid biosynthesis; L-arginine biosynthesis; carbamoyl phosphate from bicarbonate: step 1/1. It participates in pyrimidine metabolism; UMP biosynthesis via de novo pathway; (S)-dihydroorotate from bicarbonate: step 1/3. In terms of biological role, small subunit of the glutamine-dependent carbamoyl phosphate synthetase (CPSase). CPSase catalyzes the formation of carbamoyl phosphate from the ammonia moiety of glutamine, carbonate, and phosphate donated by ATP, constituting the first step of 2 biosynthetic pathways, one leading to arginine and/or urea and the other to pyrimidine nucleotides. The small subunit (glutamine amidotransferase) binds and cleaves glutamine to supply the large subunit with the substrate ammonia. This is Carbamoyl phosphate synthase small chain from Brucella canis (strain ATCC 23365 / NCTC 10854 / RM-666).